A 65-amino-acid chain; its full sequence is Large ribosomal subunit protein uL29 (65 aa).

It belongs to the universal ribosomal protein uL29 family.

The chain is Large ribosomal subunit protein uL29 from Parabacteroides distasonis (strain ATCC 8503 / DSM 20701 / CIP 104284 / JCM 5825 / NCTC 11152).